We begin with the raw amino-acid sequence, 266 residues long: MKAVVLTLAVLFLTGSQARHFWQQDDPQSPWDRVKDLVTVYVDAVKDGGREYVAQFEASALGKQLNLKLLDNWDTLGSTVTKLREQIGPVTQEFWDNLEKETEVLRQEMSKDLEEVKQKVQPYLDDFQKKWQEEVELYRQKVAPLGTELREGARQKLQELHEKLSPLGEELRDRARTHVDALRAQLAPYSDELRERLAARLQALKESGGASLAEYHAKASEHLSTLSEKAKPALEDLRQGLLPVLESFKVGLMAIVDEATKKLNAQ.

Residues 1 to 18 form the signal peptide; sequence MKAVVLTLAVLFLTGSQA. 2 consecutive repeat copies span residues 67–88 and 89–110. Residues 67–266 form a 10 X approximate tandem repeats region; sequence LKLLDNWDTL…DEATKKLNAQ (200 aa). Methionine 109 is modified (methionine sulfoxide). A 3; half-length repeat occupies 111-121; it reads KDLEEVKQKVQ. 5 tandem repeats follow at residues 122–143, 144–165, 166–187, 188–209, and 210–231. The 9; half-length repeat unit spans residues 232–242; sequence PALEDLRQGLL. Repeat unit 10 spans residues 243–266; sequence PVLESFKVGLMAIVDEATKKLNAQ.

It belongs to the apolipoprotein A1/A4/E family. Homodimer. Interacts with APOA1BP and CLU. Component of a sperm activating protein complex (SPAP), consisting of APOA1, an immunoglobulin heavy chain, an immunoglobulin light chain and albumin. Interacts with NDRG1. Interacts with SCGB3A2. Interacts with NAXE and YJEFN3. Post-translationally, glycosylated. In terms of processing, palmitoylated. Phosphorylation sites are present in the extracellular medium.

Its subcellular location is the secreted. Participates in the reverse transport of cholesterol from tissues to the liver for excretion by promoting cholesterol efflux from tissues and by acting as a cofactor for the lecithin cholesterol acyltransferase (LCAT). As part of the SPAP complex, activates spermatozoa motility. The chain is Apolipoprotein A-I (APOA1) from Acinonyx jubatus (Cheetah).